We begin with the raw amino-acid sequence, 288 residues long: MGLAAVKTRQKFGLDPRNTAWSNDQSRFGHKHLMRFGWQPGQGLGTQPVQSMKTHIKVSIKDDNLGLGAKLKKNKGDKIDEFDNGECAGLDVFQRILGRLNGKETEVNKELEIQRKDKILNGKWGVHFVKGDTLASTWDPKTKKLLSYSQMEKDSSSDEESDDDEDEKKKHKIEKKEAKKSKKRKRDSESDSESKKKKKSKKDKKEKKSKKDKKNKKEKESKKDKKSKHKKDKKQEIRTASIESSTSATSIPESVSTRLSVRSKWIKQKRAAVMDSKALNEIFMVTGN.

Residues 25-72 enclose the G-patch domain; sequence QSRFGHKHLMRFGWQPGQGLGTQPVQSMKTHIKVSIKDDNLGLGAKLK. Residues 147–258 form a disordered region; the sequence is SYSQMEKDSS…TSIPESVSTR (112 aa). Positions 157–166 are enriched in acidic residues; it reads SDEESDDDED. Basic residues-rich tracts occupy residues 169–185 and 195–214; these read KKHK…KKRK and KKKK…KDKK. Residues 238–256 show a composition bias toward low complexity; sequence RTASIESSTSATSIPESVS.

It belongs to the PINX1 family.

The protein localises to the nucleus. The protein resides in the nucleolus. In terms of biological role, involved in rRNA-processing at A0, A1 and A2 sites and negatively regulates telomerase. The polypeptide is Protein PXR1 (PXR1) (Candida glabrata (strain ATCC 2001 / BCRC 20586 / JCM 3761 / NBRC 0622 / NRRL Y-65 / CBS 138) (Yeast)).